A 280-amino-acid polypeptide reads, in one-letter code: MNSPHQQQTADRRQVSLITGASRGIGRTLALTLARRGGTVVVNYKKNADLAQKTVAEVEEAGGQGFAVQADVETTEGVTALFDEVAQRCGRLDHFVSNAAASAFKNIVDLGPHHLDRSYAMNLRPFVLGAQQAVKLMDNGGRIVALSSYGSVRAYPTYAMLGGMKAAIESWVRYMAVEFAPYGINVNAVNGGLIDSDSLEFFYNVEGMPPMQGVLDRIPARRPGTVQEMADTIAFLLGDGAGYITGQTLVVDGGLSIVAPPFFADAGEALELPPRPTRDA.

Residues 22–25 (SRGI), 71–72 (DV), and N98 contribute to the NADP(+) site. Catalysis depends on proton acceptor residues Y158 and K165. NADP(+) contacts are provided by residues K165 and 194–196 (IDS).

Belongs to the short-chain dehydrogenases/reductases (SDR) family. Homodimer.

The catalysed reaction is (4R,5R)-4,5-dihydroxycyclohex-2-ene-1-carbonyl-CoA + NADP(+) = (3R,4R)-3,4-dihydroxycyclohexa-1,5-diene-1-carbonyl-CoA + NADPH + H(+). It catalyses the reaction (3S)-3-hydroxycyclohexane-1-carbonyl-CoA + NADP(+) = (5S)-5-hydroxycyclohex-1-ene-1-carbonyl-CoA + NADPH + H(+). The enzyme catalyses cyclohexane-1-carbonyl-CoA + NADP(+) = cyclohex-1-ene-1-carbonyl-CoA + NADPH + H(+). It participates in antibiotic biosynthesis. Its activity is regulated as follows. Inhibited by the thiol inhibitors p-chloromercuribenzoate, N-ethylmaleimide and iodoacetamide. Also inhibited by various divalent cations. Involved in the biosynthesis of the antifungal antibiotic ansatrienin A (mycotrienin I). Catalyzes three of the reductive steps involved in the formation of the cyclohexanecarboxylic acid (CHC) moiety of ansatrienin from shikimic acid. Can use 3,4-dihydroxycyclohexa-1,5-diene-1-carbonyl-CoA, 5-hydroxycyclohex-1-ene-1-carbonyl-CoA and cyclohex-1-ene-1-carbonyl-CoA as substrates. The sequence is that of 1-cyclohexenylcarbonyl-CoA reductase from Streptomyces collinus.